The sequence spans 42 residues: Delta-hexatoxin-Iw1a (42 aa).

Disulfide bonds link cysteine 1–cysteine 15, cysteine 8–cysteine 20, cysteine 14–cysteine 31, and cysteine 16–cysteine 42.

The protein belongs to the neurotoxin 06 (delta-actx) family. In terms of tissue distribution, expressed by the venom gland.

The protein localises to the secreted. Its function is as follows. Inhibits tetrodotoxin-sensitive sodium channels by binding to site 3. It slows the inactivation, causes a prolongation of action potential duration resulting in repetitive firing in autonomic and motor nerve fibers. Does not depolarize the resting potential. Does not affect tetrodotoxin-resistant sodium channels. This lethal neurotoxin is active on both insect and mammalian voltage-gated sodium channels (Nav). This Illawarra wisharti (Illawarra funnel-web spider) protein is Delta-hexatoxin-Iw1a.